Reading from the N-terminus, the 176-residue chain is NAD(P)H-quinone oxidoreductase subunit 6, chloroplastic (176 aa).

5 helical membrane-spanning segments follow: residues 10–30, 33–53, 60–80, 95–115, and 152–172; these read ILML…VLLT, IYSA…YFLL, VAQL…AVMF, IGDG…MTTI, and FYLP…GAIT.

Belongs to the complex I subunit 6 family. NDH is composed of at least 16 different subunits, 5 of which are encoded in the nucleus.

Its subcellular location is the plastid. It localises to the chloroplast thylakoid membrane. It catalyses the reaction a plastoquinone + NADH + (n+1) H(+)(in) = a plastoquinol + NAD(+) + n H(+)(out). The enzyme catalyses a plastoquinone + NADPH + (n+1) H(+)(in) = a plastoquinol + NADP(+) + n H(+)(out). Functionally, NDH shuttles electrons from NAD(P)H:plastoquinone, via FMN and iron-sulfur (Fe-S) centers, to quinones in the photosynthetic chain and possibly in a chloroplast respiratory chain. The immediate electron acceptor for the enzyme in this species is believed to be plastoquinone. Couples the redox reaction to proton translocation, and thus conserves the redox energy in a proton gradient. The polypeptide is NAD(P)H-quinone oxidoreductase subunit 6, chloroplastic (ndhG) (Triticum aestivum (Wheat)).